Consider the following 1073-residue polypeptide: MGHFVVQGDLPWILCSLRLVIMIIAGKVSPTSSDALFSVPVPSATSSPPEVYLPATFKLSNTQLAFFLQENRAPSYGSQRGHPLQRSESFVVFQTKELPAVNISLGPFTQDQTLSKDLLQPSSPLDIPGRLTVNWKVRAFIVQSRVYASNPLVQVLFYIAGRDWDDFKIQDKLPCVRLHAFRDVREIKTSCRLQGNLAQCLAQLDLPSTWFNVNVAPLGRRKSSGTDGLELTGETLQVELYYTLHDPDSNDECGESYPRRGGPSRGESLSQQPLLRIGSISLYQPSQEQLVVDKQLDKNLFLRLPERPLKPGETLNIYLLLVPNSTVEQFTLKVKAKKGVNLLSTKSRSNQWRVEWDMQSGAKHSIATVEASKIKGVSGDMAGSIEIMQLDFEMENFTSQSVTRRINWNIDYRGQNPTSDAEKVVTELTVVQKDIQAIIPLSMDTEIINTAVLTGRTVAIPVKVVSIELNGAVTDVSSSVQCKSFNEDIVKVSMNCDYVFVNGKETRGSMNARVIFSYEHLSAPLELTVWVPKLPLKVELSDNRLSFIKGWRVPILPDRRTARDSDDDDDDDRKVSRGCTLQYQRAQIKVLTQFHTTSSEGTNQMITMLGPDWQVDVTELVQDSLKVVDGRVAELADRTVLVANELGSSTLKVESPLAVEAVLGETQFSVVDEKVSIVELRVHAISGLALNLQPSPGNSHTMVAKATGLQTLSTLKQEASFSIWVYYSDNTAAPLSMYDPKDYNLNGTSADDKVVTVAQQPQQRWPVIIAEGEGTGDIVHVEMTISETCQKTKRKSVIASSSVFVKVRFGTDEDSEEDMEMETEIDTRMPANTRRPAIDSNVGGAGYEPSNEQPASVPIDYTNFPTISNPEEPTEEDEEDDEFVHSPRSMTDLEIGMYALLGVFCLAILVFLINCIVFVLKYRHKRIPPEGQANMDHSHHWVFLGNGEPLRTQSDLSPQTVESPSNTLEGVQTCCHGDHHSSGSSQTSVQSQVHGRGDGSSGGSTKDHGEDASSPTSKRKRVKFTTFTLPTEDLPYNSIPIANEEDIQWVCQDMGFQDQEELHDYMRRIKEIA.

An N-terminal signal peptide occupies residues 1–33 (MGHFVVQGDLPWILCSLRLVIMIIAGKVSPTSS). Residues 34–899 (DALFSVPVPS…MTDLEIGMYA (866 aa)) are Extracellular-facing. Asn102 carries an N-linked (GlcNAc...) asparagine glycan. The segment at 246–270 (DPDSNDECGESYPRRGGPSRGESLS) is disordered. Asn324, Asn396, and Asn746 each carry an N-linked (GlcNAc...) asparagine glycan. Residues 900–920 (LLGVFCLAILVFLINCIVFVL) form a helical membrane-spanning segment. Over 921–1073 (KYRHKRIPPE…DYMRRIKEIA (153 aa)) the chain is Cytoplasmic. Residues 952–970 (TQSDLSPQTVESPSNTLEG) are compositionally biased toward polar residues. The interval 952–1024 (TQSDLSPQTV…PTSKRKRVKF (73 aa)) is disordered. Residues 982–994 (SGSSQTSVQSQVH) show a composition bias toward low complexity.

This sequence belongs to the TMEM132 family.

It is found in the membrane. Functionally, required for normal inner ear hair cell function and hearing. This Danio rerio (Zebrafish) protein is Transmembrane protein 132E (tmem132e).